The primary structure comprises 428 residues: UPF0597 protein PBPRB0240 (428 aa).

Belongs to the UPF0597 family.

The chain is UPF0597 protein PBPRB0240 from Photobacterium profundum (strain SS9).